A 757-amino-acid chain; its full sequence is 5-methyltetrahydropteroyltriglutamate--homocysteine methyltransferase (757 aa).

5-methyltetrahydropteroyltri-L-glutamate contacts are provided by residues 16-19 and Lys-112; that span reads RELK. L-homocysteine-binding positions include 432 to 434 and Glu-485; that span reads IGS. L-methionine-binding positions include 432–434 and Glu-485; that span reads IGS. Residues 516 to 517 and Trp-562 each bind 5-methyltetrahydropteroyltri-L-glutamate; that span reads RC. Asp-600 contributes to the L-homocysteine binding site. L-methionine is bound at residue Asp-600. Glu-606 is a 5-methyltetrahydropteroyltri-L-glutamate binding site. The Zn(2+) site is built by His-642, Cys-644, and Glu-666. The active-site Proton donor is the His-695. A Zn(2+)-binding site is contributed by Cys-727.

The protein belongs to the vitamin-B12 independent methionine synthase family. Zn(2+) is required as a cofactor.

It carries out the reaction 5-methyltetrahydropteroyltri-L-glutamate + L-homocysteine = tetrahydropteroyltri-L-glutamate + L-methionine. It functions in the pathway amino-acid biosynthesis; L-methionine biosynthesis via de novo pathway; L-methionine from L-homocysteine (MetE route): step 1/1. In terms of biological role, catalyzes the transfer of a methyl group from 5-methyltetrahydrofolate to homocysteine resulting in methionine formation. This Actinobacillus pleuropneumoniae serotype 5b (strain L20) protein is 5-methyltetrahydropteroyltriglutamate--homocysteine methyltransferase.